A 229-amino-acid chain; its full sequence is Cytidylate kinase (229 aa).

12–20 (GPSGVGKST) is an ATP binding site.

This sequence belongs to the cytidylate kinase family. Type 1 subfamily.

It localises to the cytoplasm. It carries out the reaction CMP + ATP = CDP + ADP. The enzyme catalyses dCMP + ATP = dCDP + ADP. The sequence is that of Cytidylate kinase from Mesomycoplasma hyopneumoniae (strain 7448) (Mycoplasma hyopneumoniae).